Reading from the N-terminus, the 178-residue chain is Plasmid transfer protein TraF (178 aa).

The first 30 residues, M1 to G30, serve as a signal peptide directing secretion.

This sequence belongs to the peptidase S26C family.

The protein resides in the periplasm. Functionally, required for donor-specific phage sensitivity. May be involved in pilus assembly. The chain is Plasmid transfer protein TraF (traF) from Escherichia coli.